Reading from the N-terminus, the 152-residue chain is Acidic phospholipase A2 (152 aa).

Positions 1–21 are cleaved as a signal peptide; that stretch reads MNPAHLLVLSAVCVSLLGASS. Residues 22-27 constitute a propeptide that is removed on maturation; sequence IPPQPL. 7 disulfide bridges follow: Cys38/Cys104, Cys54/Cys151, Cys56/Cys72, Cys71/Cys132, Cys78/Cys125, Cys88/Cys118, and Cys111/Cys123. The Ca(2+) site is built by Tyr55, Gly57, and Gly59. The active site involves His75. Residue Asp76 coordinates Ca(2+). Residue Asp126 is part of the active site.

It belongs to the phospholipase A2 family. Group I subfamily. D49 sub-subfamily. The cofactor is Ca(2+). In terms of tissue distribution, expressed by the venom gland.

The protein resides in the secreted. It carries out the reaction a 1,2-diacyl-sn-glycero-3-phosphocholine + H2O = a 1-acyl-sn-glycero-3-phosphocholine + a fatty acid + H(+). PLA2 catalyzes the calcium-dependent hydrolysis of the 2-acyl groups in 3-sn-phosphoglycerides. The sequence is that of Acidic phospholipase A2 from Ophiophagus hannah (King cobra).